The chain runs to 459 residues: Cysteine--tRNA ligase (459 aa).

Position 28 (Cys-28) interacts with Zn(2+). The short motif at 30-40 (VTVYDLCHIGH) is the 'HIGH' region element. Positions 209, 234, and 238 each coordinate Zn(2+). The short motif at 266–270 (KMSKS) is the 'KMSKS' region element. Lys-269 is a binding site for ATP.

Belongs to the class-I aminoacyl-tRNA synthetase family. Monomer. Zn(2+) is required as a cofactor.

Its subcellular location is the cytoplasm. It catalyses the reaction tRNA(Cys) + L-cysteine + ATP = L-cysteinyl-tRNA(Cys) + AMP + diphosphate. This is Cysteine--tRNA ligase (cysS) from Haemophilus influenzae (strain ATCC 51907 / DSM 11121 / KW20 / Rd).